The chain runs to 226 residues: 2,3-bisphosphoglycerate-dependent phosphoglycerate mutase (226 aa).

Residues arginine 8–asparagine 15, threonine 21–glycine 22, arginine 58, glutamate 109–tyrosine 112, lysine 120, arginine 136–arginine 137, and glycine 180–asparagine 181 each bind substrate. Histidine 9 serves as the catalytic Tele-phosphohistidine intermediate. Glutamate 109 functions as the Proton donor/acceptor in the catalytic mechanism.

It belongs to the phosphoglycerate mutase family. BPG-dependent PGAM subfamily.

The enzyme catalyses (2R)-2-phosphoglycerate = (2R)-3-phosphoglycerate. It participates in carbohydrate degradation; glycolysis; pyruvate from D-glyceraldehyde 3-phosphate: step 3/5. Catalyzes the interconversion of 2-phosphoglycerate and 3-phosphoglycerate. The protein is 2,3-bisphosphoglycerate-dependent phosphoglycerate mutase of Chlamydia trachomatis serovar L2b (strain UCH-1/proctitis).